The following is a 300-amino-acid chain: MKQYLITGGTGMVGSQLVNEIKKSDSHITILTRHDQISNNKKISYVNWAKSGWEHKVPQNIDVVINLAGATLNKRWTPEYKQTLMLSRIQSTQALYELFKSRNKAPKVLFNASATGYYPPDLFMSYTEVYKTLPFDFLSDIVYQWERFAQQFEQLGTRVVIGRFGIILSNEGGALQTMKLPYEYYIGGKLGSGQQWYSWIHINDLIQAILFLINNESASGPFNLTAPIPERQNLFGYTLARAMHKPHETWVPSLAMRLILGQMSTVVLDTQKVLPNKIQALGFQFKYSNLKMALEDLISK.

Belongs to the NAD(P)-dependent epimerase/dehydratase family. SDR39U1 subfamily.

The chain is Epimerase family protein SAR0825 from Staphylococcus aureus (strain MRSA252).